The primary structure comprises 416 residues: D-amino acid dehydrogenase (416 aa).

3–17 (ITILGSGVIGVTTAY) is an FAD binding site.

Belongs to the DadA oxidoreductase family. FAD serves as cofactor.

It catalyses the reaction a D-alpha-amino acid + A + H2O = a 2-oxocarboxylate + AH2 + NH4(+). It participates in amino-acid degradation; D-alanine degradation; NH(3) and pyruvate from D-alanine: step 1/1. Functionally, oxidative deamination of D-amino acids. This is D-amino acid dehydrogenase from Brucella abortus (strain S19).